Reading from the N-terminus, the 205-residue chain is Adenylyl-sulfate kinase (205 aa).

31–38 is an ATP binding site; sequence GLSGSGKS. Residue Ser105 is the Phosphoserine intermediate of the active site.

It belongs to the APS kinase family.

It catalyses the reaction adenosine 5'-phosphosulfate + ATP = 3'-phosphoadenylyl sulfate + ADP + H(+). It participates in sulfur metabolism; hydrogen sulfide biosynthesis; sulfite from sulfate: step 2/3. In terms of biological role, catalyzes the synthesis of activated sulfate. This Shewanella pealeana (strain ATCC 700345 / ANG-SQ1) protein is Adenylyl-sulfate kinase.